The chain runs to 111 residues: UPF0342 protein gbs1446 (111 aa).

It belongs to the UPF0342 family.

In Streptococcus agalactiae serotype III (strain NEM316), this protein is UPF0342 protein gbs1446.